A 216-amino-acid polypeptide reads, in one-letter code: Serine/threonine-protein phosphatase 1 (216 aa).

Mn(2+) contacts are provided by Asp24, His26, Asp53, and Asn79. His80 (proton donor) is an active-site residue. His185 is a Mn(2+) binding site.

The protein belongs to the PPP phosphatase family. PP-1 subfamily. Requires Mn(2+) as cofactor.

It catalyses the reaction O-phospho-L-seryl-[protein] + H2O = L-seryl-[protein] + phosphate. The catalysed reaction is O-phospho-L-threonyl-[protein] + H2O = L-threonyl-[protein] + phosphate. Its activity is regulated as follows. Inhibited by cadmium, copper, zinc when added cobalt when added concomitantly with manganese. In terms of biological role, can hydrolyze phosphorylated Ser-, Thr- or Tyr-substrates in vitro. The natural substrate is unknown. The chain is Serine/threonine-protein phosphatase 1 (pphA) from Salmonella typhimurium (strain LT2 / SGSC1412 / ATCC 700720).